Reading from the N-terminus, the 155-residue chain is Small ribosomal subunit protein uS7cz/uS7cy (155 aa).

The protein belongs to the universal ribosomal protein uS7 family. As to quaternary structure, part of the 30S ribosomal subunit.

The protein resides in the plastid. The protein localises to the chloroplast. Its function is as follows. One of the primary rRNA binding proteins, it binds directly to 16S rRNA where it nucleates assembly of the head domain of the 30S subunit. This is Small ribosomal subunit protein uS7cz/uS7cy (rps7-A) from Anthoceros angustus (Hornwort).